The chain runs to 1111 residues: Myosin IB heavy chain (1111 aa).

Residues 9–691 enclose the Myosin motor domain; sequence QGTDDLVMLP…TVFLLEEALD (683 aa). 102–109 contributes to the ATP binding site; that stretch reads GESGAGKT. A Phosphoserine modification is found at S332. Positions 547–627 are actin-binding; sequence GSLQKKRPTT…GFAYRNTFDK (81 aa). One can recognise a TH1 domain in the interval 729 to 913; sequence KERQRNSIDR…KGLIGTIASG (185 aa). The interval 910–1058 is disordered; that stretch reads IASGLPSSTD…PAPQPSRPTA (149 aa). Polar residues predominate over residues 914 to 928; the sequence is LPSSTDSTPKNYNPN. Composition is skewed to low complexity over residues 929–944, 952–967, and 991–1012; these read SMSQASSRPAPQQSAG, GAGQPQPQQPQQQQRP, and PMGAPQQGGAPQQGAGRQLPQP. Over residues 1017–1040 the composition is skewed to gly residues; it reads GAPGGRGAPMGRGAPGGGPAGAGG. One can recognise an SH3 domain in the interval 1053–1111; it reads PSRPTAKALYDYDASSTDELSFKEGDIIFIVQKDNGGWTQGELKSGQKGWAPTNYLQYN.

The protein belongs to the TRAFAC class myosin-kinesin ATPase superfamily. Myosin family. As to quaternary structure, myosin I heavy chain is single-headed. Dimer of a heavy and a light chain. Inability to self-assemble into filaments.

The protein localises to the cell projection. It localises to the pseudopodium. It is found in the cytoplasm. Its subcellular location is the cell cortex. Myosin is a protein that binds to actin and has ATPase activity that is activated by actin. Myosin IB may have a role in chemotaxis and aggregation; it could serve to stabilize and even retract cortical structures, such as pseudopods and lamellopods. Involved in the whole cell motility of aggregation-stages cells. Overexpression results in significant decrease in the rate of cellular translocation and fluid-phase pinocytosis and abnormalities in the normal rearrangement of the actin cytoskeleton. This chain is Myosin IB heavy chain (myoB), found in Dictyostelium discoideum (Social amoeba).